A 220-amino-acid chain; its full sequence is LHFPL tetraspan subfamily member 1 protein (220 aa).

Positions 1 to 20 are cleaved as a signal peptide; it reads MRNSLTMVGTFWAFLSLVTA. A run of 2 helical transmembrane segments spans residues 86 to 106 and 122 to 142; these read VVTGAGCALLLLVALAAVLGC and AAQFVGGLLISAGCALYPLGW. An N-linked (GlcNAc...) asparagine glycan is attached at asparagine 153. A helical membrane pass occupies residues 165–185; it reads LGWAYYCAGGGAAAAMLICTW.

Belongs to the LHFP family. As to expression, widely expressed. Strongly expressed in vagina and ovary. Weakly expressed in spleen, kidney, thymus, testis, brain, lung, intestine and uterus.

The protein localises to the membrane. The chain is LHFPL tetraspan subfamily member 1 protein from Mus musculus (Mouse).